We begin with the raw amino-acid sequence, 97 residues long: Signal recognition particle 19 kDa protein (97 aa).

The protein belongs to the SRP19 family. Part of the signal recognition particle protein translocation system, which is composed of SRP and FtsY. Archaeal SRP consists of a 7S RNA molecule of 300 nucleotides and two protein subunits: SRP54 and SRP19.

It is found in the cytoplasm. In terms of biological role, involved in targeting and insertion of nascent membrane proteins into the cytoplasmic membrane. Binds directly to 7S RNA and mediates binding of the 54 kDa subunit of the SRP. This Pyrobaculum calidifontis (strain DSM 21063 / JCM 11548 / VA1) protein is Signal recognition particle 19 kDa protein.